The following is a 372-amino-acid chain: Dual-specificity RNA methyltransferase RlmN (372 aa).

The Proton acceptor role is filled by glutamate 93. A Radical SAM core domain is found at glutamate 99 to aspartate 338. Cysteine 106 and cysteine 343 are joined by a disulfide. Positions 113, 117, and 120 each coordinate [4Fe-4S] cluster. Residues glycine 167–glutamate 168, serine 199, serine 221–histidine 223, and asparagine 300 each bind S-adenosyl-L-methionine. Cysteine 343 acts as the S-methylcysteine intermediate in catalysis.

It belongs to the radical SAM superfamily. RlmN family. Requires [4Fe-4S] cluster as cofactor.

It is found in the cytoplasm. It catalyses the reaction adenosine(2503) in 23S rRNA + 2 reduced [2Fe-2S]-[ferredoxin] + 2 S-adenosyl-L-methionine = 2-methyladenosine(2503) in 23S rRNA + 5'-deoxyadenosine + L-methionine + 2 oxidized [2Fe-2S]-[ferredoxin] + S-adenosyl-L-homocysteine. The catalysed reaction is adenosine(37) in tRNA + 2 reduced [2Fe-2S]-[ferredoxin] + 2 S-adenosyl-L-methionine = 2-methyladenosine(37) in tRNA + 5'-deoxyadenosine + L-methionine + 2 oxidized [2Fe-2S]-[ferredoxin] + S-adenosyl-L-homocysteine. Its function is as follows. Specifically methylates position 2 of adenine 2503 in 23S rRNA and position 2 of adenine 37 in tRNAs. m2A2503 modification seems to play a crucial role in the proofreading step occurring at the peptidyl transferase center and thus would serve to optimize ribosomal fidelity. This chain is Dual-specificity RNA methyltransferase RlmN, found in Psychromonas ingrahamii (strain DSM 17664 / CCUG 51855 / 37).